The following is a 285-amino-acid chain: AT-hook motif nuclear-localized protein 21 (285 aa).

Residues 17 to 95 are disordered; it reads DGGGGGQFTT…GSKNKPKPPV (79 aa). Basic residues predominate over residues 39–50; it reads NHHHHHHNHNHH. The segment covering 63–73 has biased composition (gly residues); sequence GLGGGGGGGSG. A DNA-binding region (a.T hook) is located at residues 78 to 90; sequence RRPRGRPAGSKNK. Positions 102-238 constitute a PPC domain; it reads ANTLRAHILE…EHEEHLQSGG (137 aa).

Preferentially expressed in roots, but also in flowers and leaves. Detected in the inflorescence meristem, floral primordia and developing reproductive organs.

It is found in the nucleus. The protein resides in the nucleoplasm. Its function is as follows. Transcription factor that specifically binds AT-rich DNA sequences related to the nuclear matrix attachment regions (MARs). Binds to the MARs present in the ETTIN (ETT) promoter leading to a negative regulation of its gene expression. Functions as a molecular node downstream of the homeotic protein AGAMOUS (AG), regulating patterning and differentiation of reproductive organs. Acts as a chromatin remodeling factor that modifies the architecture of ETTIN (ETT) chromatin by modulating H3 methylation leading to the regulation of ETT expression. Seems to be involved in the regulation of a set of reproductives genes including CRABS CLAW (CRC), JAGGED (JAG) and KNUCKLES (KNU). In Arabidopsis thaliana (Mouse-ear cress), this protein is AT-hook motif nuclear-localized protein 21.